A 405-amino-acid polypeptide reads, in one-letter code: NADH-quinone oxidoreductase subunit D (405 aa).

Belongs to the complex I 49 kDa subunit family. In terms of assembly, NDH-1 is composed of 14 different subunits. Subunits NuoB, C, D, E, F, and G constitute the peripheral sector of the complex.

Its subcellular location is the cell inner membrane. It carries out the reaction a quinone + NADH + 5 H(+)(in) = a quinol + NAD(+) + 4 H(+)(out). In terms of biological role, NDH-1 shuttles electrons from NADH, via FMN and iron-sulfur (Fe-S) centers, to quinones in the respiratory chain. The immediate electron acceptor for the enzyme in this species is believed to be ubiquinone. Couples the redox reaction to proton translocation (for every two electrons transferred, four hydrogen ions are translocated across the cytoplasmic membrane), and thus conserves the redox energy in a proton gradient. In Leptospira interrogans serogroup Icterohaemorrhagiae serovar copenhageni (strain Fiocruz L1-130), this protein is NADH-quinone oxidoreductase subunit D.